We begin with the raw amino-acid sequence, 248 residues long: Probable transcriptional regulatory protein MYPE8020 (248 aa).

Belongs to the TACO1 family.

The protein localises to the cytoplasm. The polypeptide is Probable transcriptional regulatory protein MYPE8020 (Malacoplasma penetrans (strain HF-2) (Mycoplasma penetrans)).